The sequence spans 767 residues: Serine/threonine-protein kinase DCLK2 (767 aa).

Positions 1–44 (MASTRSIELEHFEERDKRPRPGSRRGAPSSSGGSSISGPKGNGL) are disordered. The segment covering 7-19 (IELEHFEERDKRP) has biased composition (basic and acidic residues). Low complexity predominate over residues 24–43 (RRGAPSSSGGSSISGPKGNG). Phosphothreonine is present on T61. Doublecortin domains follow at residues 72–158 (KKAR…VDYT) and 196–279 (KLVT…AQDD). The segment covering 301–311 (KYSGSRSPGLS) has biased composition (low complexity). Residues 301–391 (KYSGSRSPGL…GPELDRCMSP (91 aa)) are disordered. The span at 327–338 (SAYSTAKSPVNG) shows a compositional bias: polar residues. Positions 339–362 (TPSSQLSTPKSTKSSSSSPTSPGS) are enriched in low complexity. The span at 369-380 (ISAQGRSSSNVN) shows a compositional bias: polar residues. At S377 the chain carries Phosphoserine. The region spanning 409–666 (YRIGKVIGDG…AGEILSHPWV (258 aa)) is the Protein kinase domain. ATP is bound by residues 415 to 423 (IGDGNFAVV) and K438. The Proton acceptor role is filled by D530. S662 is modified (phosphoserine). A Phosphothreonine modification is found at T681. Basic and acidic residues predominate over residues 721 to 734 (HCRDSSKSSREQTS). Positions 721-767 (HCRDSSKSSREQTSAREAPPPPESPRPPGPPATSGCDPAGTWRRHRD) are disordered. Positions 738–751 (APPPPESPRPPGPP) are enriched in pro residues.

The protein belongs to the protein kinase superfamily. CAMK Ser/Thr protein kinase family. CaMK subfamily. As to quaternary structure, interacts with MAPK8IP1/JIP-1, MAPK8IP2/JIP-2, MAPK9/JNK2, PPP1R9B/NEURABIN-2 and actin. Binds to and stabilizes microtubules; binding affinity is strongly reduced by autophosphorylation. In terms of processing, autophosphorylated.

Its subcellular location is the cytoplasm. The protein resides in the cytoskeleton. It carries out the reaction L-seryl-[protein] + ATP = O-phospho-L-seryl-[protein] + ADP + H(+). It catalyses the reaction L-threonyl-[protein] + ATP = O-phospho-L-threonyl-[protein] + ADP + H(+). Functionally, protein kinase with a significantly reduced Ca(2+)+/CAM affinity and dependence compared to other members of the CaMK family. May play a role in the down-regulation of CRE-dependent gene activation probably by phosphorylation of the CREB coactivator CRTC2/TORC2 and the resulting retention of TORC2 in the cytoplasm. This is Serine/threonine-protein kinase DCLK2 (Dclk2) from Rattus norvegicus (Rat).